A 185-amino-acid polypeptide reads, in one-letter code: Elongation factor P (185 aa).

Belongs to the elongation factor P family.

The protein localises to the cytoplasm. It functions in the pathway protein biosynthesis; polypeptide chain elongation. In terms of biological role, involved in peptide bond synthesis. Stimulates efficient translation and peptide-bond synthesis on native or reconstituted 70S ribosomes in vitro. Probably functions indirectly by altering the affinity of the ribosome for aminoacyl-tRNA, thus increasing their reactivity as acceptors for peptidyl transferase. The sequence is that of Elongation factor P from Anoxybacillus flavithermus (strain DSM 21510 / WK1).